A 506-amino-acid polypeptide reads, in one-letter code: WD repeat-containing protein 55 homolog (506 aa).

The segment covering Met-1–Ala-11 has biased composition (basic and acidic residues). 3 disordered regions span residues Met-1–Asp-20, Gln-33–Ser-87, and Ala-100–Asp-132. The span at Gln-33–Leu-48 shows a compositional bias: acidic residues. Residues Gly-61–Ser-74 show a composition bias toward low complexity. Acidic residues predominate over residues Asn-78 to Ser-87. WD repeat units lie at residues Arg-156–Leu-195, Val-200–Leu-239, Ala-243–Glu-281, Glu-284–Gln-323, Pro-326–Asp-365, and Gln-410–Asp-449. Residues Asp-480–Thr-506 are disordered. The span at Gly-493–Thr-506 shows a compositional bias: low complexity.

It belongs to the WD repeat WDR55 family.

This is WD repeat-containing protein 55 homolog from Drosophila mojavensis (Fruit fly).